The chain runs to 414 residues: Serine hydroxymethyltransferase (414 aa).

(6S)-5,6,7,8-tetrahydrofolate-binding positions include Leu116 and 120 to 122 (GHL). N6-(pyridoxal phosphate)lysine is present on Lys224. (6S)-5,6,7,8-tetrahydrofolate is bound by residues Glu240 and 348 to 350 (SPF).

Belongs to the SHMT family. As to quaternary structure, homodimer. Pyridoxal 5'-phosphate serves as cofactor.

It is found in the cytoplasm. It catalyses the reaction (6R)-5,10-methylene-5,6,7,8-tetrahydrofolate + glycine + H2O = (6S)-5,6,7,8-tetrahydrofolate + L-serine. It participates in one-carbon metabolism; tetrahydrofolate interconversion. The protein operates within amino-acid biosynthesis; glycine biosynthesis; glycine from L-serine: step 1/1. Functionally, catalyzes the reversible interconversion of serine and glycine with tetrahydrofolate (THF) serving as the one-carbon carrier. This reaction serves as the major source of one-carbon groups required for the biosynthesis of purines, thymidylate, methionine, and other important biomolecules. Also exhibits THF-independent aldolase activity toward beta-hydroxyamino acids, producing glycine and aldehydes, via a retro-aldol mechanism. The protein is Serine hydroxymethyltransferase of Campylobacter jejuni subsp. jejuni serotype O:2 (strain ATCC 700819 / NCTC 11168).